Reading from the N-terminus, the 431-residue chain is Trigger factor (431 aa).

The PPIase FKBP-type domain occupies 163–248 (GHFAVIDFTG…LSEIKVKELP (86 aa)).

This sequence belongs to the FKBP-type PPIase family. Tig subfamily.

The protein localises to the cytoplasm. It catalyses the reaction [protein]-peptidylproline (omega=180) = [protein]-peptidylproline (omega=0). Its function is as follows. Involved in protein export. Acts as a chaperone by maintaining the newly synthesized protein in an open conformation. Functions as a peptidyl-prolyl cis-trans isomerase. The polypeptide is Trigger factor (Geobacter sulfurreducens (strain ATCC 51573 / DSM 12127 / PCA)).